The primary structure comprises 175 residues: Transcription factor E (175 aa).

In terms of domain architecture, HTH TFE/IIEalpha-type spans 4-88; that stretch reads AEDLFINLAK…YWKPNIDQIN (85 aa).

This sequence belongs to the TFE family. In terms of assembly, monomer. Interaction with RNA polymerase subunits RpoF and RpoE is necessary for Tfe stimulatory transcription activity. Able to interact with Tbp and RNA polymerase in the absence of DNA promoter. Interacts both with the preinitiation and elongation complexes.

Transcription factor that plays a role in the activation of archaeal genes transcribed by RNA polymerase. Facilitates transcription initiation by enhancing TATA-box recognition by TATA-box-binding protein (Tbp), and transcription factor B (Tfb) and RNA polymerase recruitment. Not absolutely required for transcription in vitro, but particularly important in cases where Tbp or Tfb function is not optimal. It dynamically alters the nucleic acid-binding properties of RNA polymerases by stabilizing the initiation complex and destabilizing elongation complexes. Seems to translocate with the RNA polymerase following initiation and acts by binding to the non template strand of the transcription bubble in elongation complexes. This chain is Transcription factor E, found in Saccharolobus islandicus (strain Y.N.15.51 / Yellowstone #2) (Sulfolobus islandicus).